We begin with the raw amino-acid sequence, 141 residues long: Hemoglobin subunit alpha (141 aa).

The Globin domain maps to Val1–Arg141. The residue at position 3 (Ser3) is a Phosphoserine. Lys7 carries the post-translational modification N6-succinyllysine. Thr8 carries the post-translational modification Phosphothreonine. Lys11 bears the N6-succinyllysine mark. Position 16 is an N6-acetyllysine; alternate (Lys16). An N6-succinyllysine; alternate modification is found at Lys16. A Phosphotyrosine modification is found at Tyr24. Ser35 carries the phosphoserine modification. At Lys40 the chain carries N6-succinyllysine. A Phosphoserine modification is found at Ser49. His58 serves as a coordination point for O2. Residue His87 coordinates heme b. Ser102 carries the phosphoserine modification. Thr108 is subject to Phosphothreonine. Ser124 and Ser131 each carry phosphoserine. 2 positions are modified to phosphothreonine: Thr134 and Thr137. Ser138 carries the phosphoserine modification.

This sequence belongs to the globin family. Heterotetramer of two alpha chains and two beta chains. In terms of tissue distribution, red blood cells.

In terms of biological role, involved in oxygen transport from the lung to the various peripheral tissues. Functionally, hemopressin acts as an antagonist peptide of the cannabinoid receptor CNR1. Hemopressin-binding efficiently blocks cannabinoid receptor CNR1 and subsequent signaling. This chain is Hemoglobin subunit alpha (HBA), found in Cebus capucinus (White-faced sapajou).